The following is a 332-amino-acid chain: Ketol-acid reductoisomerase (NADP(+)) (332 aa).

A KARI N-terminal Rossmann domain is found at methionine 1–threonine 182. NADP(+) contacts are provided by residues tyrosine 25–glutamine 28, lysine 48, serine 53, and aspartate 83–glutamine 86. Histidine 108 is a catalytic residue. Residue glycine 134 participates in NADP(+) binding. In terms of domain architecture, KARI C-terminal knotted spans threonine 183–aspartate 329. Mg(2+) is bound by residues aspartate 191, glutamate 195, glutamate 227, and glutamate 231. Substrate is bound at residue serine 252.

The protein belongs to the ketol-acid reductoisomerase family. The cofactor is Mg(2+).

It carries out the reaction (2R)-2,3-dihydroxy-3-methylbutanoate + NADP(+) = (2S)-2-acetolactate + NADPH + H(+). The catalysed reaction is (2R,3R)-2,3-dihydroxy-3-methylpentanoate + NADP(+) = (S)-2-ethyl-2-hydroxy-3-oxobutanoate + NADPH + H(+). It functions in the pathway amino-acid biosynthesis; L-isoleucine biosynthesis; L-isoleucine from 2-oxobutanoate: step 2/4. Its pathway is amino-acid biosynthesis; L-valine biosynthesis; L-valine from pyruvate: step 2/4. In terms of biological role, involved in the biosynthesis of branched-chain amino acids (BCAA). Catalyzes an alkyl-migration followed by a ketol-acid reduction of (S)-2-acetolactate (S2AL) to yield (R)-2,3-dihydroxy-isovalerate. In the isomerase reaction, S2AL is rearranged via a Mg-dependent methyl migration to produce 3-hydroxy-3-methyl-2-ketobutyrate (HMKB). In the reductase reaction, this 2-ketoacid undergoes a metal-dependent reduction by NADPH to yield (R)-2,3-dihydroxy-isovalerate. The sequence is that of Ketol-acid reductoisomerase (NADP(+)) from Cenarchaeum symbiosum (strain A).